Here is a 710-residue protein sequence, read N- to C-terminus: Protein Smaug homolog 1 (710 aa).

2 disordered regions span residues 276–319 (ARGS…FQDE) and 441–476 (NQAT…ESDL). Residues 309 to 318 (QSTACNTFQD) are compositionally biased toward polar residues. The 61-residue stretch at 319–379 (EGSGMKDVPA…KIVISIQKLK (61 aa)) folds into the SAM domain.

The protein belongs to the SMAUG family.

Its subcellular location is the cytoplasm. It localises to the cell projection. The protein localises to the dendrite. It is found in the synapse. The protein resides in the synaptosome. Its function is as follows. Acts as a translational repressor. This is Protein Smaug homolog 1 (samd4a) from Xenopus laevis (African clawed frog).